Reading from the N-terminus, the 113-residue chain is Retrotransposon Gag-like protein 8 (113 aa).

This sequence belongs to the FAM127 family.

The polypeptide is Retrotransposon Gag-like protein 8 (RTL8A) (Bos taurus (Bovine)).